The following is a 203-amino-acid chain: Nucleoside triphosphate pyrophosphatase (203 aa).

Asp80 (proton acceptor) is an active-site residue.

The protein belongs to the Maf family. It depends on a divalent metal cation as a cofactor.

It is found in the cytoplasm. It carries out the reaction a ribonucleoside 5'-triphosphate + H2O = a ribonucleoside 5'-phosphate + diphosphate + H(+). It catalyses the reaction a 2'-deoxyribonucleoside 5'-triphosphate + H2O = a 2'-deoxyribonucleoside 5'-phosphate + diphosphate + H(+). Its function is as follows. Nucleoside triphosphate pyrophosphatase. May have a dual role in cell division arrest and in preventing the incorporation of modified nucleotides into cellular nucleic acids. The protein is Nucleoside triphosphate pyrophosphatase of Gluconobacter oxydans (strain 621H) (Gluconobacter suboxydans).